We begin with the raw amino-acid sequence, 541 residues long: Nif-specific regulatory protein (541 aa).

Residues 23–158 (RLETTLNNFV…MAANLAGRAI (136 aa)) enclose the GAF domain. The interval 170-191 (TFAEEQQEQQNSRDEQSQSSAR) is disordered. One can recognise a Sigma-54 factor interaction domain in the interval 200–428 (IIGESTALMT…LENCVRRTAT (229 aa)). ATP is bound by residues 228–235 (GETGTGKE) and 291–300 (ANGGTLLLDE). The segment at 429 to 498 (LARSKTITSS…SAGVASNLIE (70 aa)) is inter-domain linker. The a divalent metal cation site is built by C442 and C447. The interval 499 to 541 (RDRLISALEEAGWNQAKAARILEKTPRQVGYALRRHGVDVRKL) is C-terminal DNA-binding domain. Positions 513–532 (QAKAARILEKTPRQVGYALR) form a DNA-binding region, H-T-H motif.

As to quaternary structure, interacts with sigma-54.

Required for activation of most nif operons, which are directly involved in nitrogen fixation. The chain is Nif-specific regulatory protein (nifA) from Rhizobium meliloti (strain 1021) (Ensifer meliloti).